Consider the following 908-residue polypeptide: DNA mismatch repair protein MutS (908 aa).

ATP is bound at residue 662-669 (GPNMGGKS).

It belongs to the DNA mismatch repair MutS family.

In terms of biological role, this protein is involved in the repair of mismatches in DNA. It is possible that it carries out the mismatch recognition step. This protein has a weak ATPase activity. The chain is DNA mismatch repair protein MutS from Rhizobium johnstonii (strain DSM 114642 / LMG 32736 / 3841) (Rhizobium leguminosarum bv. viciae).